Reading from the N-terminus, the 100-residue chain is Large ribosomal subunit protein uL23 (100 aa).

Belongs to the universal ribosomal protein uL23 family. As to quaternary structure, part of the 50S ribosomal subunit. Contacts protein L29, and trigger factor when it is bound to the ribosome.

One of the early assembly proteins it binds 23S rRNA. One of the proteins that surrounds the polypeptide exit tunnel on the outside of the ribosome. Forms the main docking site for trigger factor binding to the ribosome. The chain is Large ribosomal subunit protein uL23 from Synechococcus sp. (strain CC9605).